The sequence spans 1129 residues: CRISPR-associated endonuclease Cas12b (1129 aa).

The segment at methionine 1–aspartate 14 is WED-I (OBD-I) domain. Residues lysine 4–lysine 9 form a binds sgRNA region. The REC1 (Helical-1)domain stretch occupies residues methionine 15–threonine 386. Binds DNA protospacer adjacent motif (PAM) on target DNA stretches follow at residues glutamine 118 to arginine 122 and glycine 143 to asparagine 144. Residues alanine 387 to arginine 518 form a WED-II (OBD-II) domain region. The interval serine 442–glutamine 446 is binds sgRNA. Residues arginine 519–serine 628 are ruvC-I domain. Aspartate 570 acts as the For DNase activity of RuvC domain in catalysis. The tract at residues leucine 573 to arginine 574 is binds non-target ssDNA. Residues lysine 629–cysteine 658 are bridge helix domain. The tract at residues glycine 659 to valine 784 is REC2 (Helical-II) domain. Binds sgRNA regions lie at residues arginine 742–arginine 746, valine 753–glycine 754, arginine 792–threonine 796, histidine 800–glutamate 819, and tryptophan 835–tyrosine 839. A ruvC-II domain region spans residues isoleucine 785–arginine 900. The For DNase activity of RuvC domain role is filled by glutamate 848. The segment at phenylalanine 897–arginine 900 is binds non-target ssDNA. 2 residues coordinate phosphate: serine 899 and arginine 911. The tract at residues phenylalanine 901–isoleucine 974 is nuc-I domain. Residues glutamine 973–leucine 978 are binds sgRNA. The segment at histidine 975 to aspartate 993 is ruvC-III domain. The active-site For DNase activity of RuvC domain is the aspartate 977. The interval isoleucine 994–isoleucine 1129 is nuc-II domain.

It belongs to the CRISPR-associated endonuclease Cas12b family. As to quaternary structure, monomer. Requires a divalent metal cation as cofactor.

Functionally, CRISPR (clustered regularly interspaced short palindromic repeat), is an adaptive immune system that provides protection against mobile genetic elements (viruses, transposable elements and conjugative plasmids). CRISPR clusters contain sequences complementary to antecedent mobile elements and target invading nucleic acids. CRISPR clusters are transcribed and processed into CRISPR RNA (crRNA). In type II CRISPR systems correct processing of pre-crRNA requires a trans-encoded small RNA (tracrRNA), endogenous ribonuclease 3 (rnc) and this protein. The tracrRNA serves as a guide for ribonuclease 3-aided processing of pre-crRNA. Protein-crRNA-tracrRNA endonucleolytically cleave dsDNA target complementary to the spacer; protein is inactive in the absence of crRNA homologous to the target and tracrRNA. Recognizes a short motif in the CRISPR repeat sequences (the 5' PAM or protospacer adjacent motif, TTN in this organism) to help distinguish self versus nonself, as targets within the bacterial CRISPR locus do not have PAMs. PAM recognition is also required for catalytic activity. Cleavage results in staggered 6-8 base 5'-overhangs 14-17 and 23-24 bases downstream of the PAM (protospacer adjacent motif) on the non-target and target strands respectively. Both target and non-target strand DNA are probably independently cleaved in the same active site. This Alicyclobacillus acidoterrestris (strain ATCC 49025 / DSM 3922 / CIP 106132 / NCIMB 13137 / GD3B) protein is CRISPR-associated endonuclease Cas12b.